We begin with the raw amino-acid sequence, 151 residues long: Large ribosomal subunit protein bL9 (151 aa).

It belongs to the bacterial ribosomal protein bL9 family.

Binds to the 23S rRNA. The chain is Large ribosomal subunit protein bL9 from Nitrosomonas europaea (strain ATCC 19718 / CIP 103999 / KCTC 2705 / NBRC 14298).